The primary structure comprises 198 residues: Imidazoleglycerol-phosphate dehydratase (198 aa).

Belongs to the imidazoleglycerol-phosphate dehydratase family.

The protein resides in the cytoplasm. The catalysed reaction is D-erythro-1-(imidazol-4-yl)glycerol 3-phosphate = 3-(imidazol-4-yl)-2-oxopropyl phosphate + H2O. It participates in amino-acid biosynthesis; L-histidine biosynthesis; L-histidine from 5-phospho-alpha-D-ribose 1-diphosphate: step 6/9. In Magnetococcus marinus (strain ATCC BAA-1437 / JCM 17883 / MC-1), this protein is Imidazoleglycerol-phosphate dehydratase.